Reading from the N-terminus, the 858-residue chain is Elongation factor 2 (858 aa).

The tr-type G domain maps to 17-362 (ANIRNMSVIA…MITIHLPSPV (346 aa)). Residues 26–33 (AHVDHGKS), 158–161 (NKMD), and 216–218 (SGL) each bind GTP. His715 carries the diphthamide modification.

Belongs to the TRAFAC class translation factor GTPase superfamily. Classic translation factor GTPase family. EF-G/EF-2 subfamily. In terms of assembly, binds to 80S ribosomes. Actively translating ribosomes show mutually exclusive binding of eIF5a (EIF5A or EIF5A2) and EEF2/eEF2. Interacts with serbp1; interaction sequesters eef2/eEF2 at the A-site of the ribosome, thereby blocking the interaction sites of the mRNA-tRNA complex, promoting ribosome stabilization and hibernation. Interacts with habp4; interaction takes place at the A-site of hibernating ribosomes and promotes ribosome stabilization.

The protein resides in the cytoplasm. It is found in the nucleus. It carries out the reaction GTP + H2O = GDP + phosphate + H(+). Its function is as follows. Catalyzes the GTP-dependent ribosomal translocation step during translation elongation. During this step, the ribosome changes from the pre-translocational (PRE) to the post-translocational (POST) state as the newly formed A-site-bound peptidyl-tRNA and P-site-bound deacylated tRNA move to the P and E sites, respectively. Catalyzes the coordinated movement of the two tRNA molecules, the mRNA and conformational changes in the ribosome. The polypeptide is Elongation factor 2 (Xenopus laevis (African clawed frog)).